We begin with the raw amino-acid sequence, 127 residues long: Large ribosomal subunit protein bL17 (127 aa).

It belongs to the bacterial ribosomal protein bL17 family. In terms of assembly, part of the 50S ribosomal subunit. Contacts protein L32.

The sequence is that of Large ribosomal subunit protein bL17 from Legionella pneumophila (strain Corby).